The chain runs to 176 residues: Small ribosomal subunit protein uS5 (176 aa).

Residues 11 to 74 (LSEVLVDVNR…QAAKKRMMKV (64 aa)) form the S5 DRBM domain.

Belongs to the universal ribosomal protein uS5 family. In terms of assembly, part of the 30S ribosomal subunit. Contacts proteins S4 and S8.

Its function is as follows. With S4 and S12 plays an important role in translational accuracy. In terms of biological role, located at the back of the 30S subunit body where it stabilizes the conformation of the head with respect to the body. This is Small ribosomal subunit protein uS5 from Rickettsia conorii (strain ATCC VR-613 / Malish 7).